Here is a 142-residue protein sequence, read N- to C-terminus: UPF0332 protein PH1297 (142 aa).

It belongs to the UPF0332 family.

This Pyrococcus horikoshii (strain ATCC 700860 / DSM 12428 / JCM 9974 / NBRC 100139 / OT-3) protein is UPF0332 protein PH1297.